A 574-amino-acid chain; its full sequence is Efflux pump FUB11 (574 aa).

The tract at residues 1–44 (MAIDPQPSSPSLSSETIANDTIGNDNNVNEPSVEPKTQEHQHTV) is disordered. Positions 9-30 (SPSLSSETIANDTIGNDNNVNE) are enriched in polar residues. The N-linked (GlcNAc...) asparagine glycan is linked to Asn-19. The next 11 helical transmembrane spans lie at 116–136 (VATL…LIWA), 148–168 (FFFT…AGSI), 176–196 (FLTG…IADM), 208–228 (MFSG…GFLG), 235–255 (WLHG…TVFI), 318–338 (IYIS…PIVF), 348–368 (IGGL…ISFA), 394–414 (AIMG…TTFA), 419–439 (IVPI…FMAL), 449–469 (IFAA…GAAF), and 484–504 (WASS…FLFY). The tract at residues 552-574 (HNSHTSATHSHGHRRSLSCTRSV) is disordered.

The protein belongs to the major facilitator superfamily. DHA1 family. Polyamines/proton antiporter (TC 2.A.1.2.16) subfamily.

The protein localises to the cell membrane. Its function is as follows. Efflux pump involved in export of fusaric acid, a mycotoxin with low to moderate toxicity to animals and humans, but with high phytotoxic properties. Constitutes a self-protecting mechanism of the fungus against critical levels of fusaric acid within the cell. This is Efflux pump FUB11 from Gibberella fujikuroi (strain CBS 195.34 / IMI 58289 / NRRL A-6831) (Bakanae and foot rot disease fungus).